A 214-amino-acid polypeptide reads, in one-letter code: Small ribosomal subunit protein uS5 (214 aa).

Positions 54-117 (LRYDIVDIGI…RDAKMRIIPV (64 aa)) constitute an S5 DRBM domain.

Belongs to the universal ribosomal protein uS5 family. In terms of assembly, part of the 30S ribosomal subunit. Contacts protein S4.

Functionally, with S4 and S12 plays an important role in translational accuracy. The protein is Small ribosomal subunit protein uS5 of Sulfolobus acidocaldarius (strain ATCC 33909 / DSM 639 / JCM 8929 / NBRC 15157 / NCIMB 11770).